The primary structure comprises 141 residues: Hemoglobin subunit alpha (141 aa).

One can recognise a Globin domain in the interval 1–141 (VLSPTDKTNV…VSTVLTSKYR (141 aa)). The residue at position 3 (Ser3) is a Phosphoserine. Lys7 bears the N6-succinyllysine mark. The residue at position 8 (Thr8) is a Phosphothreonine. N6-succinyllysine is present on Lys11. At Tyr24 the chain carries Phosphotyrosine. Ser35 is subject to Phosphoserine. At Lys40 the chain carries N6-succinyllysine. Ser49 is modified (phosphoserine). His58 serves as a coordination point for O2. His87 is a binding site for heme b. The residue at position 102 (Ser102) is a Phosphoserine. Thr108 is subject to Phosphothreonine. Ser124 is subject to Phosphoserine. Phosphothreonine is present on residues Thr134 and Thr137. A Phosphoserine modification is found at Ser138.

It belongs to the globin family. In terms of assembly, heterotetramer of two alpha chains and two beta chains. As to expression, red blood cells.

Involved in oxygen transport from the lung to the various peripheral tissues. Its function is as follows. Hemopressin acts as an antagonist peptide of the cannabinoid receptor CNR1. Hemopressin-binding efficiently blocks cannabinoid receptor CNR1 and subsequent signaling. The polypeptide is Hemoglobin subunit alpha (HBA) (Rhinoceros unicornis (Greater Indian rhinoceros)).